Reading from the N-terminus, the 265-residue chain is Type III pantothenate kinase (265 aa).

6–13 serves as a coordination point for ATP; it reads DVGNTNIV. Residues Y100 and 107 to 110 contribute to the substrate site; that span reads GADR. D109 functions as the Proton acceptor in the catalytic mechanism. D129 is a K(+) binding site. T132 contributes to the ATP binding site. Residue T184 coordinates substrate.

This sequence belongs to the type III pantothenate kinase family. Homodimer. NH4(+) is required as a cofactor. K(+) serves as cofactor.

It is found in the cytoplasm. The catalysed reaction is (R)-pantothenate + ATP = (R)-4'-phosphopantothenate + ADP + H(+). Its pathway is cofactor biosynthesis; coenzyme A biosynthesis; CoA from (R)-pantothenate: step 1/5. Catalyzes the phosphorylation of pantothenate (Pan), the first step in CoA biosynthesis. The chain is Type III pantothenate kinase from Alkaliphilus oremlandii (strain OhILAs) (Clostridium oremlandii (strain OhILAs)).